The primary structure comprises 206 residues: Large ribosomal subunit protein uL4 (206 aa).

This sequence belongs to the universal ribosomal protein uL4 family. In terms of assembly, part of the 50S ribosomal subunit.

Functionally, one of the primary rRNA binding proteins, this protein initially binds near the 5'-end of the 23S rRNA. It is important during the early stages of 50S assembly. It makes multiple contacts with different domains of the 23S rRNA in the assembled 50S subunit and ribosome. Its function is as follows. Forms part of the polypeptide exit tunnel. The chain is Large ribosomal subunit protein uL4 from Methylorubrum extorquens (strain CM4 / NCIMB 13688) (Methylobacterium extorquens).